We begin with the raw amino-acid sequence, 237 residues long: Thiamine-phosphate synthase (237 aa).

Residues Q57–K61 and N98 each bind 4-amino-2-methyl-5-(diphosphooxymethyl)pyrimidine. D99 and D118 together coordinate Mg(2+). A 4-amino-2-methyl-5-(diphosphooxymethyl)pyrimidine-binding site is contributed by S136. Residue T162–T164 participates in 2-[(2R,5Z)-2-carboxy-4-methylthiazol-5(2H)-ylidene]ethyl phosphate binding. A 4-amino-2-methyl-5-(diphosphooxymethyl)pyrimidine-binding site is contributed by K165. G193 lines the 2-[(2R,5Z)-2-carboxy-4-methylthiazol-5(2H)-ylidene]ethyl phosphate pocket.

It belongs to the thiamine-phosphate synthase family. The cofactor is Mg(2+).

It carries out the reaction 2-[(2R,5Z)-2-carboxy-4-methylthiazol-5(2H)-ylidene]ethyl phosphate + 4-amino-2-methyl-5-(diphosphooxymethyl)pyrimidine + 2 H(+) = thiamine phosphate + CO2 + diphosphate. It catalyses the reaction 2-(2-carboxy-4-methylthiazol-5-yl)ethyl phosphate + 4-amino-2-methyl-5-(diphosphooxymethyl)pyrimidine + 2 H(+) = thiamine phosphate + CO2 + diphosphate. The catalysed reaction is 4-methyl-5-(2-phosphooxyethyl)-thiazole + 4-amino-2-methyl-5-(diphosphooxymethyl)pyrimidine + H(+) = thiamine phosphate + diphosphate. It participates in cofactor biosynthesis; thiamine diphosphate biosynthesis; thiamine phosphate from 4-amino-2-methyl-5-diphosphomethylpyrimidine and 4-methyl-5-(2-phosphoethyl)-thiazole: step 1/1. In terms of biological role, condenses 4-methyl-5-(beta-hydroxyethyl)thiazole monophosphate (THZ-P) and 2-methyl-4-amino-5-hydroxymethyl pyrimidine pyrophosphate (HMP-PP) to form thiamine monophosphate (TMP). In Mycolicibacterium gilvum (strain PYR-GCK) (Mycobacterium gilvum (strain PYR-GCK)), this protein is Thiamine-phosphate synthase.